A 116-amino-acid chain; its full sequence is Large ribosomal subunit protein uL18 (116 aa).

The protein belongs to the universal ribosomal protein uL18 family. In terms of assembly, part of the 50S ribosomal subunit; part of the 5S rRNA/L5/L18/L25 subcomplex. Contacts the 5S and 23S rRNAs.

Functionally, this is one of the proteins that bind and probably mediate the attachment of the 5S RNA into the large ribosomal subunit, where it forms part of the central protuberance. The polypeptide is Large ribosomal subunit protein uL18 (Shewanella woodyi (strain ATCC 51908 / MS32)).